The sequence spans 551 residues: Chitinase (551 aa).

An N-terminal signal peptide occupies residues 1 to 17; the sequence is MLYKLLNVLWLVAVSNA. Positions 1–149 are chitin binding domain (CBD); that stretch reads MLYKLLNVLW…NKPGRREDKI (149 aa). In terms of domain architecture, GH18 spans 148–548; the sequence is KIVAAYFVEW…NAINAQFKPK (401 aa). N-linked (GlcNAc...) asparagine; by host glycosylation is present at N173. E305 serves as the catalytic Proton donor. The N-linked (GlcNAc...) asparagine; by host glycan is linked to N444. The Prevents secretion from ER signature appears at 548 to 551; that stretch reads KDEL.

The protein belongs to the glycosyl hydrolase 18 family. Chitinase class II subfamily. Interacts with host VCATH.

Its subcellular location is the host endoplasmic reticulum lumen. The enzyme catalyses Random endo-hydrolysis of N-acetyl-beta-D-glucosaminide (1-&gt;4)-beta-linkages in chitin and chitodextrins.. In terms of biological role, plays a role in host liquefaction to facilitate horizontal transmission of the virus by hydrolyzing beta-chitin and by regulating the cysteine protease VCATH. Localized in the host reticulum endoplasmic via its KDEL motif, interacts with and thus prevents VCATH secretion before host cell lysis occurs. The protein is Chitinase (CHIA) of Lepidoptera (butterflies and moths).